Consider the following 105-residue polypeptide: Large ribosomal subunit protein eL36 (105 aa).

Belongs to the eukaryotic ribosomal protein eL36 family. In terms of assembly, component of the large ribosomal subunit.

The protein resides in the cytoplasm. The protein localises to the cytosol. Component of the large ribosomal subunit. The ribosome is a large ribonucleoprotein complex responsible for the synthesis of proteins in the cell. In Hydrophis hardwickii (Hardwick's spine-bellied seasnake), this protein is Large ribosomal subunit protein eL36 (RPL36).